We begin with the raw amino-acid sequence, 360 residues long: GTPase Obg (360 aa).

The region spanning 1–156 (MFVDSVEIII…KCVRLELKLI (156 aa)) is the Obg domain. One can recognise an OBG-type G domain in the interval 157 to 360 (ADIGLVGFPN…LKFVLLKALQ (204 aa)). Residues 163 to 170 (GFPNAGKS), 188 to 192 (FTTLV), 210 to 213 (DIPG), 279 to 282 (NKCD), and 341 to 343 (SAV) each bind GTP. 2 residues coordinate Mg(2+): S170 and T190.

This sequence belongs to the TRAFAC class OBG-HflX-like GTPase superfamily. OBG GTPase family. Monomer. Requires Mg(2+) as cofactor.

It localises to the cytoplasm. Its function is as follows. An essential GTPase which binds GTP, GDP and possibly (p)ppGpp with moderate affinity, with high nucleotide exchange rates and a fairly low GTP hydrolysis rate. Plays a role in control of the cell cycle, stress response, ribosome biogenesis and in those bacteria that undergo differentiation, in morphogenesis control. The polypeptide is GTPase Obg (Helicobacter pylori (strain P12)).